The sequence spans 575 residues: Proline--tRNA ligase (575 aa).

This sequence belongs to the class-II aminoacyl-tRNA synthetase family. ProS type 1 subfamily. Homodimer.

Its subcellular location is the cytoplasm. It catalyses the reaction tRNA(Pro) + L-proline + ATP = L-prolyl-tRNA(Pro) + AMP + diphosphate. Catalyzes the attachment of proline to tRNA(Pro) in a two-step reaction: proline is first activated by ATP to form Pro-AMP and then transferred to the acceptor end of tRNA(Pro). As ProRS can inadvertently accommodate and process non-cognate amino acids such as alanine and cysteine, to avoid such errors it has two additional distinct editing activities against alanine. One activity is designated as 'pretransfer' editing and involves the tRNA(Pro)-independent hydrolysis of activated Ala-AMP. The other activity is designated 'posttransfer' editing and involves deacylation of mischarged Ala-tRNA(Pro). The misacylated Cys-tRNA(Pro) is not edited by ProRS. The sequence is that of Proline--tRNA ligase from Solidesulfovibrio magneticus (strain ATCC 700980 / DSM 13731 / RS-1) (Desulfovibrio magneticus).